The chain runs to 159 residues: Ribosomal RNA large subunit methyltransferase H (159 aa).

S-adenosyl-L-methionine contacts are provided by residues Leu76, Gly108, and 127–132 (FSKMTF).

It belongs to the RNA methyltransferase RlmH family. As to quaternary structure, homodimer.

It localises to the cytoplasm. It carries out the reaction pseudouridine(1915) in 23S rRNA + S-adenosyl-L-methionine = N(3)-methylpseudouridine(1915) in 23S rRNA + S-adenosyl-L-homocysteine + H(+). Its function is as follows. Specifically methylates the pseudouridine at position 1915 (m3Psi1915) in 23S rRNA. The chain is Ribosomal RNA large subunit methyltransferase H from Bifidobacterium animalis subsp. lactis (strain AD011).